A 172-amino-acid polypeptide reads, in one-letter code: Stellate protein CG33247 (172 aa).

The protein belongs to the casein kinase 2 subunit beta family. Interacts in vitro with the casein kinase 2 alpha subunit (CkII-alpha). The relevance of such interaction is however unclear in vivo. In terms of tissue distribution, probably not expressed in wild-type flies. In males lacking the Y chromosome, it is testis-specific and constitutes the main component of star-shaped crystals.

Functionally, unknown. In males lacking the Y chromosome, its strong overexpression leads to the appearance of proteinaceous star-shaped crystals in the primary spermatocytes causing meiotic drive, possibly by interfering with normal casein kinase 2 activity. The sequence is that of Stellate protein CG33247 (Ste:CG33247) from Drosophila melanogaster (Fruit fly).